Consider the following 314-residue polypeptide: Transmembrane protein 178B (314 aa).

An N-terminal signal peptide occupies residues 1-24 (MRLLAGAGLCLALAALALLAVALS). Residues 32–83 (DARRHRDRCRKPGGKRNDPGYMYTPGQHLPLRGEPPSSRIRSPRGGEPGGVR) are disordered. Over residues 36–45 (HRDRCRKPGG) the composition is skewed to basic residues. The next 3 helical transmembrane spans lie at 194–214 (AGFIGMAVSIILFGWMVGVLG), 228–248 (LLFLMGGTCCIISLCTCVAGI), and 274–294 (MFCAWGGLGLTLLSGFLCTLA).

It belongs to the TMEM178 family.

It localises to the membrane. This chain is Transmembrane protein 178B (tmem178b), found in Xenopus tropicalis (Western clawed frog).